We begin with the raw amino-acid sequence, 549 residues long: Chaperonin GroEL 2 (549 aa).

ATP-binding positions include 29–32, K50, 86–90, G414, 477–479, and D493; these read TLGP, DGTTT, and NAA.

Belongs to the chaperonin (HSP60) family. Forms a cylinder of 14 subunits composed of two heptameric rings stacked back-to-back. Interacts with the co-chaperonin GroES.

Its subcellular location is the cytoplasm. It carries out the reaction ATP + H2O + a folded polypeptide = ADP + phosphate + an unfolded polypeptide.. Its function is as follows. Together with its co-chaperonin GroES, plays an essential role in assisting protein folding. The GroEL-GroES system forms a nano-cage that allows encapsulation of the non-native substrate proteins and provides a physical environment optimized to promote and accelerate protein folding. The protein is Chaperonin GroEL 2 of Myxococcus xanthus (strain DK1622).